The following is a 56-amino-acid chain: Large ribosomal subunit protein bL32 (56 aa).

The segment covering 1–16 has biased composition (basic residues); it reads MAVQKSKKSRSRRDMR. Residues 1–56 are disordered; the sequence is MAVQKSKKSRSRRDMRRSHDAIDGPTLSVDSTTGETHRRHHVTADGYYKGRKVVNK.

It belongs to the bacterial ribosomal protein bL32 family.

The chain is Large ribosomal subunit protein bL32 from Idiomarina loihiensis (strain ATCC BAA-735 / DSM 15497 / L2-TR).